A 189-amino-acid chain; its full sequence is Elongation factor P (189 aa).

It belongs to the elongation factor P family.

It localises to the cytoplasm. It participates in protein biosynthesis; polypeptide chain elongation. Its function is as follows. Involved in peptide bond synthesis. Stimulates efficient translation and peptide-bond synthesis on native or reconstituted 70S ribosomes in vitro. Probably functions indirectly by altering the affinity of the ribosome for aminoacyl-tRNA, thus increasing their reactivity as acceptors for peptidyl transferase. This chain is Elongation factor P, found in Campylobacter lari (strain RM2100 / D67 / ATCC BAA-1060).